A 510-amino-acid polypeptide reads, in one-letter code: NAD(P)H-quinone oxidoreductase subunit 2 A, chloroplastic (510 aa).

A run of 12 helical transmembrane segments spans residues Leu24 to Leu44, Trp59 to Trp79, Ile99 to Ile119, Met124 to Cys144, Leu149 to Tyr169, Tyr183 to Gly203, Ile229 to Phe249, Trp295 to Ile315, Met323 to Asp343, Tyr354 to Leu374, Ala395 to Phe415, and Leu418 to Leu438.

Belongs to the complex I subunit 2 family. In terms of assembly, NDH is composed of at least 16 different subunits, 5 of which are encoded in the nucleus.

The protein resides in the plastid. It is found in the chloroplast thylakoid membrane. It carries out the reaction a plastoquinone + NADH + (n+1) H(+)(in) = a plastoquinol + NAD(+) + n H(+)(out). The enzyme catalyses a plastoquinone + NADPH + (n+1) H(+)(in) = a plastoquinol + NADP(+) + n H(+)(out). In terms of biological role, NDH shuttles electrons from NAD(P)H:plastoquinone, via FMN and iron-sulfur (Fe-S) centers, to quinones in the photosynthetic chain and possibly in a chloroplast respiratory chain. The immediate electron acceptor for the enzyme in this species is believed to be plastoquinone. Couples the redox reaction to proton translocation, and thus conserves the redox energy in a proton gradient. This is NAD(P)H-quinone oxidoreductase subunit 2 A, chloroplastic from Dioscorea elephantipes (Elephant's foot yam).